We begin with the raw amino-acid sequence, 871 residues long: DNA mismatch repair protein MutS (871 aa).

ATP is bound at residue 630–637; that stretch reads GPNMGGKS. Residues 830–849 form a disordered region; it reads KEEPESKSASPVEAALAGIN.

It belongs to the DNA mismatch repair MutS family.

Functionally, this protein is involved in the repair of mismatches in DNA. It is possible that it carries out the mismatch recognition step. This protein has a weak ATPase activity. The sequence is that of DNA mismatch repair protein MutS from Verminephrobacter eiseniae (strain EF01-2).